Here is a 470-residue protein sequence, read N- to C-terminus: Arginine ADP-riboxanase OspC1 (470 aa).

NAD(+) is bound by residues His-138, Gln-139, Ser-140, Leu-144, Ile-157, Asn-167, Phe-183, His-201, Phe-206, Asp-226, and Glu-320. Residue Glu-320 is part of the active site. ANK repeat units follow at residues 363–392, 399–431, and 438–467; these read IALQ…ITRQ, HELY…DVNT, and SGDC…TSDN.

The protein belongs to the OspC family. As to quaternary structure, interacts with host calmodulin (CALM1, CALM2 and/or CALM3); specifically interacts with the apo form of calmodulin, preventing calcium-binding.

It is found in the secreted. The protein resides in the host nucleus. It catalyses the reaction L-arginyl-[protein] + NAD(+) = ADP-riboxanated L-argininyl-[protein] + nicotinamide + NH4(+) + H(+). In terms of biological role, ADP-riboxanase effector that mediates arginine ADP-riboxanation of host caspases. ADP-riboxanation of host apoptotic caspases (CASP3, CASP8 and CASP9) prevents their activation, thereby inhibiting host cell extrinsic and intrinsic apoptosis. Does not catalyze ADP-riboxanation of host CASP4/CASP11. Independently of its ADP-riboxanase activity, acts as an inhibitor of calcium signaling by inhibiting host calmodulin, preventing activation of the JAK-STAT signaling pathway in response to interferon-beta. Mechanistically, acts by binding to the apo form of calmodulin, preventing calcium-binding and ability to activate host CaMK2 (CAMKII), which is required to stimulate the JAK-STAT signaling pathway in response to interferon-beta. The sequence is that of Arginine ADP-riboxanase OspC1 from Shigella flexneri.